We begin with the raw amino-acid sequence, 658 residues long: Deoxynucleoside triphosphate triphosphohydrolase SAMHD1 (658 aa).

Positions 23–68 (SQPRVSEVAMQSAPLEQPAKRPRCDGSPRTPPSTPPATANLSADDD) are disordered. Ser49 carries the post-translational modification Phosphoserine. Thr52 bears the Phosphothreonine mark. At Ser55 the chain carries Phosphoserine. Thr56 is modified (phosphothreonine). Phosphoserine is present on residues Ser64 and Ser125. Positions 77-142 (WEPEDVCSFL…IECIQQLSQS (66 aa)) constitute an SAM domain. Residues Lys148 and Val149 each coordinate GTP. Asn151 serves as a coordination point for dGTP. The GTP site is built by Asp169, Gln174, and Arg177. Residues Leu182 and Val188 each coordinate dGTP. The 153-residue stretch at 196–348 (RFEHSLGVGY…GIDVDKWDYF (153 aa)) folds into the HD domain. Positions 199, 238, and 239 each coordinate Mn(2+). DGTP is bound by residues Asp239, His247, His265, and Glu266. The active site involves His265. Position 343 (Asp343) interacts with Mn(2+). DGTP-binding residues include Tyr347, Asp351, Arg365, Arg395, Lys397, Asn401, Tyr417, His419, and Lys420. GTP-binding residues include Arg494 and Lys498. Residue Lys509 forms a Glycyl lysine isopeptide (Lys-Gly) (interchain with G-Cter in SUMO2) linkage. Lys565 is a GTP binding site. Lys565 contacts dGTP. Thr634 carries the phosphothreonine modification. Thr634 bears the (Microbial infection) Phosphothreonine mark.

The protein belongs to the SAMHD1 family. Homodimer; in absence of GTP and dNTP. Homotetramer; in GTP- and dNTP-bound form. Interacts with MRE11; leading to stimulate the exonuclease activity of MRE11. Interacts with RBBP8/CtIP. Interacts with RBBP8/CtIP. Interacts (via its C-terminus) with CD81. The cofactor is Zn(2+). In terms of processing, phosphorylation at Thr-634 by CDK1 acts as a switch to control deoxynucleoside triphosphate (dNTPase)-dependent and -independent functions. Phosphorylation at Thr-634 takes place in cycling cells: it reduces the stability of the homotetramer, impairing the dNTPase activity and subsequent ability to restrict infection by viruses. It also inhibits ability to suppress LINE-1 retrotransposon activity. In contrast, phosphorylation at Thr-634 promotes DNA end resection at stalled replication forks in response to DNA damage. Post-translationally, (Microbial infection) Phosphorylation at Thr-634 by mouse cytomegalovirus kinase M97 leads to a reduced level of dNTP hydrolase activity and the loss of viral restriction. Not phosphorylated by CDK1 at the C-terminus.

It is found in the nucleus. Its subcellular location is the chromosome. It carries out the reaction a 2'-deoxyribonucleoside 5'-triphosphate + H2O = a 2'-deoxyribonucleoside + triphosphate + H(+). It catalyses the reaction dATP + H2O = 2'-deoxyadenosine + triphosphate + H(+). The enzyme catalyses dCTP + H2O = 2'-deoxycytidine + triphosphate + H(+). The catalysed reaction is dGTP + H2O = 2'-deoxyguanosine + triphosphate + H(+). It carries out the reaction dTTP + H2O = thymidine + triphosphate + H(+). With respect to regulation, allosterically activated and regulated via the combined actions of GTP and dNTPs (dATP, dGTP, dTTP and dCTP): Allosteric site 1 binds GTP, while allosteric site 2 binds dNTP. Allosteric activation promotes the formation of highly active homotetramers. Isoform 1: Phosphorylation at Thr-634 impairs homotetramerization, thereby inhibiting dNTPase activity, leading to reduced ability to restrict infection by viruses. Functionally, protein that acts both as a host restriction factor involved in defense response to virus and as a regulator of DNA end resection at stalled replication forks. Has deoxynucleoside triphosphate (dNTPase) activity, which is required to restrict infection by viruses: dNTPase activity reduces cellular dNTP levels to levels too low for retroviral reverse transcription to occur, blocking early-stage virus replication in dendritic and other myeloid cells. Likewise, suppresses LINE-1 retrotransposon activity. In addition to virus restriction, dNTPase activity acts as a regulator of DNA precursor pools by regulating dNTP pools. Phosphorylation at Thr-634 acts as a switch to control dNTPase-dependent and -independent functions: it inhibits dNTPase activity and ability to restrict infection by viruses, while it promotes DNA end resection at stalled replication forks. Functions during S phase at stalled DNA replication forks to promote the resection of gapped or reversed forks: acts by stimulating the exonuclease activity of MRE11, activating the ATR-CHK1 pathway and allowing the forks to restart replication. Its ability to promote degradation of nascent DNA at stalled replication forks is required to prevent induction of type I interferons, thereby preventing chronic inflammation. Ability to promote DNA end resection at stalled replication forks is independent of dNTPase activity. Enhances immunoglobulin hypermutation in B-lymphocytes by promoting transversion mutation. This is Deoxynucleoside triphosphate triphosphohydrolase SAMHD1 from Mus musculus (Mouse).